Reading from the N-terminus, the 382-residue chain is F-box/kelch-repeat protein At3g16580 (382 aa).

The region spanning 9-55 is the F-box domain; that stretch reads WEFSLSLPWELIEEILSRVPPESLLRFKTVSKQWNALFRDKTFINNH. 2 Kelch repeats span residues 150 to 196 and 334 to 381; these read KIFA…NIYT and WIYV…AELQ.

The protein is F-box/kelch-repeat protein At3g16580 of Arabidopsis thaliana (Mouse-ear cress).